A 282-amino-acid polypeptide reads, in one-letter code: Pantothenate synthetase (282 aa).

26–33 lines the ATP pocket; the sequence is MGNLHEGH. Catalysis depends on H33, which acts as the Proton donor. Q57 provides a ligand contact to (R)-pantoate. Q57 lines the beta-alanine pocket. 144-147 is an ATP binding site; it reads GKKD. Position 150 (Q150) interacts with (R)-pantoate. ATP is bound by residues V173 and 181-184; that span reads LSSR.

It belongs to the pantothenate synthetase family. As to quaternary structure, homodimer.

Its subcellular location is the cytoplasm. The catalysed reaction is (R)-pantoate + beta-alanine + ATP = (R)-pantothenate + AMP + diphosphate + H(+). The protein operates within cofactor biosynthesis; (R)-pantothenate biosynthesis; (R)-pantothenate from (R)-pantoate and beta-alanine: step 1/1. In terms of biological role, catalyzes the condensation of pantoate with beta-alanine in an ATP-dependent reaction via a pantoyl-adenylate intermediate. The sequence is that of Pantothenate synthetase from Cupriavidus taiwanensis (strain DSM 17343 / BCRC 17206 / CCUG 44338 / CIP 107171 / LMG 19424 / R1) (Ralstonia taiwanensis (strain LMG 19424)).